A 328-amino-acid chain; its full sequence is Peroxidase 25 (328 aa).

The first 26 residues, 1–26, serve as a signal peptide directing secretion; it reads MGVYLGKYCYIMIIMLVLVLGKEVRS. Cystine bridges form between Cys38/Cys114, Cys71/Cys76, Cys120/Cys324, and Cys198/Cys230. His69 serves as the catalytic Proton acceptor. Residues Asp70, Val73, Gly75, Asp77, and Ser79 each coordinate Ca(2+). Residue Pro161 participates in substrate binding. His191 is a heme b binding site. Residue Thr192 coordinates Ca(2+). Asn207 carries N-linked (GlcNAc...) asparagine glycosylation. Ca(2+)-binding residues include Asp243, Ser246, and Asp251.

It belongs to the peroxidase family. Classical plant (class III) peroxidase subfamily. Heme b is required as a cofactor. Ca(2+) serves as cofactor.

It localises to the secreted. The enzyme catalyses 2 a phenolic donor + H2O2 = 2 a phenolic radical donor + 2 H2O. In terms of biological role, removal of H(2)O(2), oxidation of toxic reductants, biosynthesis and degradation of lignin, suberization, auxin catabolism, response to environmental stresses such as wounding, pathogen attack and oxidative stress. These functions might be dependent on each isozyme/isoform in each plant tissue. The sequence is that of Peroxidase 25 (PER25) from Arabidopsis thaliana (Mouse-ear cress).